Here is a 480-residue protein sequence, read N- to C-terminus: Flotillin-like protein 2 (480 aa).

The S-palmitoyl cysteine moiety is linked to residue cysteine 37. Residues 237-257 adopt a coiled-coil conformation; the sequence is ENQREAEVAQANSELAKKKAA.

This sequence belongs to the band 7/mec-2 family. Flotillin subfamily. May be palmitoylated. As to expression, expressed in flowers in green pods. Primarily expressed in vascular tissues. Upon induction of nodulation, expansion of expression in the root cortex in the region of elongating root hairs, which will eventually become colonized by bacteria. Expressed in the infection zone in nodules.

The protein localises to the cell membrane. Its subcellular location is the membrane. It is found in the caveola. Functionally, may act as a scaffolding protein within caveolar membranes, functionally participating in formation of caveolae or caveolae-like vesicles. Required for early symbiotic events and nodules formation. The sequence is that of Flotillin-like protein 2 (FLOT2) from Medicago truncatula (Barrel medic).